A 194-amino-acid chain; its full sequence is uncharacterized protein (194 aa).

It belongs to the mimivirus L114/R131 family.

This is an uncharacterized protein from Acanthamoeba polyphaga mimivirus (APMV).